The sequence spans 488 residues: Serine/threonine-protein kinase 32C (488 aa).

Residues 1–56 (MRSGAERRGSSAAAPPSSPPPGRARPAGSDVSPALPPPAASQPRARDAGDARAQPR) form a disordered region. Phosphoserine occurs at positions 10, 17, and 18. Residues 24 to 33 (ARPAGSDVSP) show a composition bias toward low complexity. A Protein kinase domain is found at 94 to 354 (FQILRAIGKG…LQDMQTAPSL (261 aa)). ATP-binding positions include 100–108 (IGKGSFGKV) and lysine 123. Catalysis depends on aspartate 217, which acts as the Proton acceptor. The span at 397-406 (HKKKKRLAKN) shows a compositional bias: basic residues. Disordered stretches follow at residues 397–420 (HKKK…QSEN) and 443–488 (KRSQ…SGSS).

The protein belongs to the protein kinase superfamily. Ser/Thr protein kinase family. Mg(2+) serves as cofactor.

It carries out the reaction L-seryl-[protein] + ATP = O-phospho-L-seryl-[protein] + ADP + H(+). The catalysed reaction is L-threonyl-[protein] + ATP = O-phospho-L-threonyl-[protein] + ADP + H(+). This is Serine/threonine-protein kinase 32C from Mus musculus (Mouse).